The sequence spans 265 residues: MIKWPWKVQESAHQTALPWQEALSIPLLTCLTEQEQSKLVALAERFLQQKRLVPLQGFELNSLRSCRIALLFCLPVLKLGLEWLDGFHEVLIYPAPFVVDDEWEDDVGLVHNQRIVQSGQSWQQGPIVLNWLDIQDSFDASGFNLIIHEVAHKLDTRNGDRASGVPFISLREVAGWEHDLHAAMNNIQEEIELVGENAASIDAYAASDPAECFAVLSEYFFSAPELFAPRFPSLWQRFCQFYQQDPLQRLHHANDTDSFSATNVH.

4 residues coordinate Zn(2+): histidine 111, histidine 148, histidine 152, and glutamate 211.

The protein belongs to the MtfA family. Interacts with Mlc. The cofactor is Zn(2+).

The protein localises to the cytoplasm. Functionally, involved in the modulation of the activity of the glucose-phosphotransferase system (glucose-PTS). Interacts with the transcriptional repressor Mlc, preventing its interaction with DNA and leading to the modulation of expression of genes regulated by Mlc, including ptsG, which encodes the PTS system glucose-specific EIICB component. In terms of biological role, shows zinc-dependent metallopeptidase activity. This is Mlc titration factor A from Escherichia coli O127:H6 (strain E2348/69 / EPEC).